Reading from the N-terminus, the 334-residue chain is MIEADRLIAPENPAFRDEDVIDRAIRPKKLADYQGQDHVRDQMEIFIKAAQLRNEALDHLLIFGPPGLGKTTLANIVANEMGVNIRTTSGPVLEKAGDLAALLTNLEENDVLFIDEIHRLSPMVEEVLYPAMEDYQLDIMIGEGPAARSIKIDLPPFTLIGATTRAGSLTSPLRDRFGITQRLEYYKIPDLQNIVQRSADCLGLSMEAEGALEVARRARGTPRIANRLLRRVRDFAEVKGNGHICADTADKALNMLDVDSKGFDYMDRKLLLAIMEKFGGGPVGLDNMAAAIGEEKDTIEDVLEPYLIQQGYLQRTPRGRIATDRAYLHFGIEK.

A large ATPase domain (RuvB-L) region spans residues 4–186 (ADRLIAPENP…FGITQRLEYY (183 aa)). ATP-binding positions include Ile25, Arg26, Gly67, Lys70, Thr71, Thr72, 133-135 (EDY), Arg176, Tyr186, and Arg223. Thr71 provides a ligand contact to Mg(2+). The tract at residues 187–257 (KIPDLQNIVQ…TADKALNMLD (71 aa)) is small ATPAse domain (RuvB-S). The interval 260–334 (SKGFDYMDRK…RAYLHFGIEK (75 aa)) is head domain (RuvB-H). Residues Arg315 and Arg320 each contribute to the DNA site.

This sequence belongs to the RuvB family. As to quaternary structure, homohexamer. Forms an RuvA(8)-RuvB(12)-Holliday junction (HJ) complex. HJ DNA is sandwiched between 2 RuvA tetramers; dsDNA enters through RuvA and exits via RuvB. An RuvB hexamer assembles on each DNA strand where it exits the tetramer. Each RuvB hexamer is contacted by two RuvA subunits (via domain III) on 2 adjacent RuvB subunits; this complex drives branch migration. In the full resolvosome a probable DNA-RuvA(4)-RuvB(12)-RuvC(2) complex forms which resolves the HJ.

The protein localises to the cytoplasm. The catalysed reaction is ATP + H2O = ADP + phosphate + H(+). In terms of biological role, the RuvA-RuvB-RuvC complex processes Holliday junction (HJ) DNA during genetic recombination and DNA repair, while the RuvA-RuvB complex plays an important role in the rescue of blocked DNA replication forks via replication fork reversal (RFR). RuvA specifically binds to HJ cruciform DNA, conferring on it an open structure. The RuvB hexamer acts as an ATP-dependent pump, pulling dsDNA into and through the RuvAB complex. RuvB forms 2 homohexamers on either side of HJ DNA bound by 1 or 2 RuvA tetramers; 4 subunits per hexamer contact DNA at a time. Coordinated motions by a converter formed by DNA-disengaged RuvB subunits stimulates ATP hydrolysis and nucleotide exchange. Immobilization of the converter enables RuvB to convert the ATP-contained energy into a lever motion, pulling 2 nucleotides of DNA out of the RuvA tetramer per ATP hydrolyzed, thus driving DNA branch migration. The RuvB motors rotate together with the DNA substrate, which together with the progressing nucleotide cycle form the mechanistic basis for DNA recombination by continuous HJ branch migration. Branch migration allows RuvC to scan DNA until it finds its consensus sequence, where it cleaves and resolves cruciform DNA. The polypeptide is Holliday junction branch migration complex subunit RuvB (Vibrio vulnificus (strain YJ016)).